We begin with the raw amino-acid sequence, 156 residues long: Small ribosomal subunit protein uS7 (156 aa).

It belongs to the universal ribosomal protein uS7 family. Part of the 30S ribosomal subunit. Contacts proteins S9 and S11.

Its function is as follows. One of the primary rRNA binding proteins, it binds directly to 16S rRNA where it nucleates assembly of the head domain of the 30S subunit. Is located at the subunit interface close to the decoding center, probably blocks exit of the E-site tRNA. This is Small ribosomal subunit protein uS7 from Streptococcus pneumoniae serotype 4 (strain ATCC BAA-334 / TIGR4).